A 554-amino-acid chain; its full sequence is (Z)-gamma-bisabolene synthase 1 (554 aa).

Mg(2+)-binding residues include aspartate 306, aspartate 310, aspartate 450, and aspartate 458. Positions 306–310 match the DDXXD motif motif; that stretch reads DDACD.

The protein belongs to the terpene synthase family. Tpsa subfamily. Mg(2+) serves as cofactor. The cofactor is Mn(2+). As to expression, predominantly expressed in roots. Expressed in the cortex and the sub-epidermal layers of roots. Also detected in leaf hydathodes and flower stigmata.

It localises to the cytoplasm. The enzyme catalyses (2E,6E)-farnesyl diphosphate = (Z)-gamma-bisabolene + diphosphate. It functions in the pathway secondary metabolite biosynthesis; terpenoid biosynthesis. In terms of biological role, involved in sesquiterpene (C15) biosynthesis. The major product is (Z)-gamma-bisabolene with minor amounts of (E)-nerolidol and alpha-bisabolol. The protein is (Z)-gamma-bisabolene synthase 1 (TPS12) of Arabidopsis thaliana (Mouse-ear cress).